A 489-amino-acid chain; its full sequence is MKFIPEITLLLLLFVHSTQAKGKRRKCPEGAWSEGKIMNTIMSNYTKMLPDAEDSVQVNIEIHVQDMGSLNEISSDFEIDILFTQLWHDSALSFAHLPACKRNITMETRLLPKIWSPNTCMINSKRTTVHASPSENVMVILYENGTVWINHRLSVKSPCNLDLRQFPFDTQTCILIFESYSHNSEEVELHWMEEAVTLMKPIQLPDFDMVHYSTKKETLLYPNGYWDQLQVTFTFKRRYGFYIIQAYVPTYLTIIVSWVSFCMEPKALPARTTVGISSLLALTFQFGNILKNLPRVSYVKAMDVWMLGCISFVFGTMVELAFVCYISRCQNSVRNAERRRERMRNSQVWANGSCRTRSNGYANGGSVISHYHPTSNGNGNNNRHDTPQVTGRGSLHRNGPPSPLNLQMTTFDSEIPLTFDQLPVSMESDRPLIEEMRSTSPPPPSGCLARFHPEAVDKFSIVAFPLAFTMFNLVYWWHYLSQTFDQNYQ.

The N-terminal stretch at 1-20 is a signal peptide; the sequence is MKFIPEITLLLLLFVHSTQA. Over 21-240 the chain is Extracellular; sequence KGKRRKCPEG…VTFTFKRRYG (220 aa). Residues Asn-44, Asn-103, and Asn-144 are each glycosylated (N-linked (GlcNAc...) asparagine). Serotonin-binding residues include Tyr-180 and Trp-226. 3 helical membrane-spanning segments follow: residues 241–261, 274–294, and 304–324; these read FYII…WVSF, VGIS…KNLP, and VWML…AFVC. Residues 325–458 are Cytoplasmic-facing; sequence YISRCQNSVR…ARFHPEAVDK (134 aa). The segment at 365–398 is disordered; the sequence is GSVISHYHPTSNGNGNNNRHDTPQVTGRGSLHRN. Residues 372 to 391 are compositionally biased toward polar residues; the sequence is HPTSNGNGNNNRHDTPQVTG. Residues 459-479 traverse the membrane as a helical segment; it reads FSIVAFPLAFTMFNLVYWWHY.

This sequence belongs to the ligand-gated ion channel (TC 1.A.9) family. As to expression, expressed in a subset of muscles, and head and tail neurons, including RME and GABAergic ventral nerve cord neurons. Expressed in AIY, RME, RID, RIF, ASI, DD1-6, and PVN neurons.

The protein resides in the membrane. It localises to the cell membrane. Functions as a 5-hydroxytryptamine (serotonin) receptor. This receptor is a ligand-gated anion-specific ion channel, selective for chloride ions. Relays a long-range endocrine signal from the body cavity neurons to modulate distal adipose triglyceride lipase atgl-1 function, via the nuclear receptor nhr-76. Together with the G-protein coupled serotonin receptor ser-1 involved in male mating behavior. May mediate an inhibitory effect of serotonin on egg laying. Involved in regulating locomotory behavior, perhaps by modulating interneuronal signaling, acting in concert with G-protein coupled serotonin receptor ser-4. In the presence of food, plays a role in initiating and extending dwelling behavior, perhaps acting in AIY, RIF and ASI neurons, in opposition to neuropeptide PDF-mediated signaling. Plays a role in aversive learning upon exposure to pathogens such as Gram-negative bacterium P.aeruginosa strain PA14; perhaps acting in interneurons in response to serotonin released by the serotonergic ADF neurons. The polypeptide is Serotonin-gated chloride channel mod-1 (Caenorhabditis elegans).